Reading from the N-terminus, the 507-residue chain is Zinc finger protein Aiolos (507 aa).

The disordered stretch occupies residues 1 to 85 (MEDIQPTVEL…PMGDAEESEM (85 aa)). Phosphothreonine is present on Thr-20. Residues Ser-22 and Ser-42 each carry the phosphoserine modification. Basic and acidic residues-rich tracts occupy residues 33-46 (KPHEIENVDSREAP) and 56-72 (DSMKVKDEYSDRDENIM). Glycyl lysine isopeptide (Lys-Gly) (interchain with G-Cter in SUMO2) cross-links involve residues Lys-61, Lys-73, and Lys-100. 3 consecutive C2H2-type zinc fingers follow at residues 117-139 (MNCDVCGLSCISFNVLMVHKRSH), 145-167 (FQCNQCGASFTQKGNLLRHIKLH), and 173-195 (FKCHLCNYACQRRDALTGHLRTH). A C2H2-type 4; atypical zinc finger spans residues 201–223 (YKCEFCGRSYKQRSSLEEHKERC). Lys-244 is covalently cross-linked (Glycyl lysine isopeptide (Lys-Gly) (interchain with G-Cter in SUMO2)). Thr-325 bears the Phosphothreonine mark. Positions 370–396 (LPSERGLSPNNSAQDSTDTDSNHEDRQ) are disordered. Phosphoserine is present on Ser-377. The C2H2-type 5 zinc finger occupies 450-472 (FRCDHCHVLFLDYVMFTIHMGCH). A mediates homodimerization and heterodimerization region spans residues 450 to 502 (FRCDHCHVLFLDYVMFTIHMGCHGFRDPFECNMCGYRSHDRYEFSSHIARGEH). The segment at 478-502 (FECNMCGYRSHDRYEFSSHIARGEH) adopts a C2H2-type 6; atypical zinc-finger fold.

It belongs to the Ikaros C2H2-type zinc-finger protein family. As to quaternary structure, homodimer. Heterodimer with other IKAROS family members. Interacts with IKZF4 and IKZF5. Interacts with HRAS. Interacts with FOXP3; this interaction may be required for silencing target genes and regulating the suppressive activity of FOXP3-positive regulatory T-cells (Treg). Interacts with BCL21L isoform Bcl-X(L); this interaction blocks the anti-apoptotic role of BCL21L. Associates with histone deacetylase complexes containing HDAC1, MTA2 and SIN3A. Interacts with IKZF1. In terms of tissue distribution, expression is restricted to lymphoid tissues. Expressed at highest levels in spleen and at lower levels in the thymus and bone marrow. First detected in more committed lymphoid progenitors and strongly up-regulated as these differentiate into pre-T and pre-B cell precursors.

The protein localises to the nucleus. The protein resides in the cytoplasm. Its function is as follows. Transcription factor that plays an important role in the regulation of lymphocyte differentiation. Binds to GGGAA. Plays an essential role in regulation of B-cell differentiation, proliferation and maturation to an effector state. Involved in regulating BCL2 expression and controlling apoptosis in T-cells in an IL2-dependent manner. The protein is Zinc finger protein Aiolos (Ikzf3) of Mus musculus (Mouse).